Reading from the N-terminus, the 128-residue chain is Iron-sulfur cluster insertion protein ErpA (128 aa).

Residues cysteine 56, cysteine 120, and cysteine 122 each coordinate iron-sulfur cluster.

It belongs to the HesB/IscA family. In terms of assembly, homodimer. Iron-sulfur cluster is required as a cofactor.

Required for insertion of 4Fe-4S clusters for at least IspG. The chain is Iron-sulfur cluster insertion protein ErpA from Xanthomonas axonopodis pv. citri (strain 306).